Here is a 140-residue protein sequence, read N- to C-terminus: uncharacterized protein (140 aa).

This is an uncharacterized protein from Neurospora crassa (strain ATCC 24698 / 74-OR23-1A / CBS 708.71 / DSM 1257 / FGSC 987).